A 114-amino-acid chain; its full sequence is Putative antiporter subunit mnhC2 (114 aa).

3 helical membrane-spanning segments follow: residues Leu3 to Ile23, Ile28 to Thr48, and Ala72 to Val92.

The protein belongs to the CPA3 antiporters (TC 2.A.63) subunit C family. As to quaternary structure, may form a heterooligomeric complex that consists of seven subunits: mnhA2, mnhB2, mnhC2, mnhD2, mnhE2, mnhF2 and mnhG2.

It is found in the cell membrane. The protein is Putative antiporter subunit mnhC2 (mnhC2) of Staphylococcus aureus (strain Mu3 / ATCC 700698).